An 86-amino-acid chain; its full sequence is Photosystem I reaction center subunit PsaK (86 aa).

2 helical membrane-spanning segments follow: residues 14–34 and 57–77; these read LQWS…AIAF and FGLP…VGAV.

The protein belongs to the PsaG/PsaK family.

It localises to the cellular thylakoid membrane. The protein is Photosystem I reaction center subunit PsaK of Nostoc punctiforme (strain ATCC 29133 / PCC 73102).